A 482-amino-acid chain; its full sequence is Adenylyltransferase and sulfurtransferase MOCS3-2 (482 aa).

Residues G125, D146, 153 to 157, K170, and 214 to 215 contribute to the ATP site; these read NNLHR and DN. Residues C255 and C258 each coordinate Zn(2+). Catalysis depends on C272, which acts as the Glycyl thioester intermediate; for adenylyltransferase activity. Zn(2+) is bound by residues C330 and C333. The Rhodanese domain maps to 385–480; that stretch reads DGEPHLLLDV…WGQDVDPDFP (96 aa). The Cysteine persulfide intermediate; for sulfurtransferase activity role is filled by C440.

It in the N-terminal section; belongs to the HesA/MoeB/ThiF family. UBA4 subfamily. Zn(2+) is required as a cofactor.

Its subcellular location is the cytoplasm. The enzyme catalyses [molybdopterin-synthase sulfur-carrier protein]-C-terminal Gly-Gly + ATP + H(+) = [molybdopterin-synthase sulfur-carrier protein]-C-terminal Gly-Gly-AMP + diphosphate. It carries out the reaction [molybdopterin-synthase sulfur-carrier protein]-C-terminal Gly-Gly-AMP + S-sulfanyl-L-cysteinyl-[cysteine desulfurase] + AH2 = [molybdopterin-synthase sulfur-carrier protein]-C-terminal-Gly-aminoethanethioate + L-cysteinyl-[cysteine desulfurase] + A + AMP + 2 H(+). It functions in the pathway tRNA modification; 5-methoxycarbonylmethyl-2-thiouridine-tRNA biosynthesis. Its pathway is cofactor biosynthesis; molybdopterin biosynthesis. Functionally, plays a central role in 2-thiolation of mcm(5)S(2)U at tRNA wobble positions of cytosolic tRNA(Lys), tRNA(Glu) and tRNA(Gln). Also essential during biosynthesis of the molybdenum cofactor. Acts by mediating the C-terminal thiocarboxylation of sulfur carriers URM1 and MOCS2A. Its N-terminus first activates URM1 and MOCS2A as acyl-adenylates (-COAMP), then the persulfide sulfur on the catalytic cysteine is transferred to URM1 and MOCS2A to form thiocarboxylation (-COSH) of their C-terminus. The reaction probably involves hydrogen sulfide that is generated from the persulfide intermediate and that acts as a nucleophile towards URM1 and MOCS2A. Subsequently, a transient disulfide bond is formed. Does not use thiosulfate as sulfur donor; NFS1 probably acting as a sulfur donor for thiocarboxylation reactions. The chain is Adenylyltransferase and sulfurtransferase MOCS3-2 from Zea mays (Maize).